The following is a 1220-amino-acid chain: Plasma membrane calcium-transporting ATPase 3 (1220 aa).

Residues 1-20 (MGDMANSSIEFHPKPQQQRD) show a composition bias toward polar residues. A disordered region spans residues 1–23 (MGDMANSSIEFHPKPQQQRDVPQ). Residues 1 to 97 (MGDMANSSIE…NFIPPKQPKT (97 aa)) are Cytoplasmic-facing. Serine 8 is subject to Phosphoserine. Residues 98–118 (FLQLVWEALQDVTLIILEVAA) form a helical membrane-spanning segment. The Extracellular segment spans residues 119–155 (IVSLGLSFYAPPGEESEACGNVSGGAEDEGEAEAGWI). Residues 156-176 (EGAAILLSVICVVLVTAFNDW) form a helical membrane-spanning segment. Residues 177-364 (SKEKQFRGLQ…KEKSVLQGKL (188 aa)) lie on the Cytoplasmic side of the membrane. The tract at residues 298-355 (EEEKKDKKGKQQDGAMESSQTKAKKQDGAVAMEMQPLKSAEGGEMEEREKKKANAPKK) is disordered. Basic and acidic residues-rich tracts occupy residues 299–308 (EEKKDKKGKQ) and 342–355 (MEEREKKKANAPKK). The chain crosses the membrane as a helical span at residues 365–384 (TKLAVQIGKAGLVMSAITVI). The Extracellular portion of the chain corresponds to 385–417 (ILVLYFVIETFVVEGRTWLAECTPVYVQYFVKF). Residues 418 to 435 (FIIGVTVLVVAVPEGLPL) form a helical membrane-spanning segment. Topologically, residues 436 to 849 (AVTISLAYSV…MWGRNVYDSI (414 aa)) are cytoplasmic. Residue aspartate 473 is the 4-aspartylphosphate intermediate of the active site. Mg(2+) is bound by residues aspartate 794 and aspartate 798. Residues 850–869 (SKFLQFQLTVNVVAVIVAFT) traverse the membrane as a helical segment. Residues 870–879 (GACITQDSPL) lie on the Extracellular side of the membrane. A helical membrane pass occupies residues 880–900 (KAVQMLWVNLIMDTFASLALA). The Cytoplasmic portion of the chain corresponds to 901–920 (TEPPTESLLLRKPYGRDKPL). Residues 921–943 (ISRTMMKNILGHAVYQLAIIFTL) form a helical membrane-spanning segment. The Extracellular segment spans residues 944–961 (LFVGELFFDIDSGRNAPL). A helical membrane pass occupies residues 962–983 (HSPPSEHYTIIFNTFVMMQLFN). Over 984-1002 (EINARKIHGERNVFDGIFS) the chain is Cytoplasmic. The chain crosses the membrane as a helical span at residues 1003–1024 (NPIFCTIVLGTFGIQIVIVQFG). Over 1025-1034 (GKPFSCSPLS) the chain is Extracellular. Residues 1035-1056 (TEQWLWCLFVGVGELVWGQVIA) form a helical membrane-spanning segment. Topologically, residues 1057–1220 (TIPTSQLKCL…SPLHSVETSL (164 aa)) are cytoplasmic. Threonine 1079 is modified (phosphothreonine). Residues 1097 to 1114 (LRRGQILWFRGLNRIQTQ) are calmodulin-binding subdomain A. Threonine 1113 is modified (phosphothreonine; by PKC). A calmodulin-binding subdomain B region spans residues 1115–1124 (IRVVKAFRSS). The interval 1166-1186 (ENEERLRAPPPPSPNQNNNAI) is disordered.

Belongs to the cation transport ATPase (P-type) (TC 3.A.3) family. Type IIB subfamily. Interacts with PDZD11. Interacts (via N-terminus) with YWHAE. Highly expressed in the cerebellum. Expressed in adrenal glands.

It localises to the cell membrane. It is found in the presynaptic cell membrane. It catalyses the reaction Ca(2+)(in) + ATP + H2O = Ca(2+)(out) + ADP + phosphate + H(+). Its activity is regulated as follows. Down-regulated by YWHAE. Its function is as follows. ATP-driven Ca(2+) ion pump involved in the maintenance of basal intracellular Ca(2+) levels at the presynaptic terminals. Uses ATP as an energy source to transport cytosolic Ca(2+) ions across the plasma membrane to the extracellular compartment. May counter-transport protons, but the mechanism and the stoichiometry of this Ca(2+)/H(+) exchange remains to be established. The protein is Plasma membrane calcium-transporting ATPase 3 of Homo sapiens (Human).